Reading from the N-terminus, the 446-residue chain is tRNA-2-methylthio-N(6)-dimethylallyladenosine synthase (446 aa).

The region spanning 5 to 121 is the MTTase N-terminal domain; sequence KYLYVETFGC…LPEIVRAAER (117 aa). Residues Cys14, Cys50, Cys84, Cys159, Cys163, and Cys166 each coordinate [4Fe-4S] cluster. A Radical SAM core domain is found at 145–375; it reads GEGGVTRFVT…QTLQQQMKRE (231 aa). One can recognise a TRAM domain in the interval 378 to 440; that stretch reads ISFVGTRQLV…QNSLLGEIVT (63 aa).

This sequence belongs to the methylthiotransferase family. MiaB subfamily. Monomer. [4Fe-4S] cluster is required as a cofactor.

It is found in the cytoplasm. It catalyses the reaction N(6)-dimethylallyladenosine(37) in tRNA + (sulfur carrier)-SH + AH2 + 2 S-adenosyl-L-methionine = 2-methylsulfanyl-N(6)-dimethylallyladenosine(37) in tRNA + (sulfur carrier)-H + 5'-deoxyadenosine + L-methionine + A + S-adenosyl-L-homocysteine + 2 H(+). Its function is as follows. Catalyzes the methylthiolation of N6-(dimethylallyl)adenosine (i(6)A), leading to the formation of 2-methylthio-N6-(dimethylallyl)adenosine (ms(2)i(6)A) at position 37 in tRNAs that read codons beginning with uridine. This Geobacter sulfurreducens (strain ATCC 51573 / DSM 12127 / PCA) protein is tRNA-2-methylthio-N(6)-dimethylallyladenosine synthase.